A 313-amino-acid chain; its full sequence is B3 domain-containing transcription factor FUS3 (313 aa).

The segment at residues F92–S194 is a DNA-binding region (TF-B3).

As to quaternary structure, interacts with KIN10. Phosphorylation by KIN10 increases its stability. Phosphorylated at one or more of the Ser-55, Ser-56 and/or Ser-57 residues. In terms of tissue distribution, expressed in cotyledons and hypocotyls.

Its subcellular location is the nucleus. Phosphorylation by KIN10 is required to positively regulates embryogenesis, seed yield, and plant growth at high temperature. Transcription regulator involved in gene regulation during late embryogenesis. Its expression to the epidermis is sufficient to control foliar organ identity by regulating positively the synthesis abscisic acid (ABA) and negatively gibberellin production. Negatively regulates TTG1 in the embryo. Positively regulates the abundance of the ABI3 protein in the seed. Cooperates with KIN10 to regulate developmental phase transitions and lateral organ development and act both as positive regulators of abscisic acid (ABA) signaling during germination. This chain is B3 domain-containing transcription factor FUS3 (FUS3), found in Arabidopsis thaliana (Mouse-ear cress).